The following is an 865-amino-acid chain: MTSATSPILLKWDPKSLEIRTLTVERLLEPLVTQVTTLVNTSNKGPSSKKKGRSKKAHVLAVSVEQATQNFLEKGEQIAKDSQDLKEELIAAVEDVRKQGDTMRVASSEFADDPCSSVKRGTMVRAARALLSAVTRLLILADMADVMRLLAHLKIELKDPQCRDEMAAARGALKKNATMLYTASQAFLRHPDVAATRANRDYVFKQVQEAIGGISSSAQATSPTDEKHGHAGIGELAAALNEFDNKIILDPLTFSEARFRPSLEERLESIISGAALMADSSCTRDDRRERIVAECNAVRQALQDLLSEYMNNTGRKEKGDPLNSAIDKMTKKTRDLRRQLRKAVMDHISDSFLETNVPLLVLIEAAKSGNEKEVKEYAQVFREHANKLVEVANLACSISNNEEGVKLVRMAATQIDSLCPQVINAALTLAARPQSKVAQDNMDVFKDQWEKQVRILTEAVDDITSVDDFLSVSENHILEDVNKCVIALQEGDVDTLDRTAGAIRGRAARVVHIINAEMENYEPGVYTERVLESIKLLSETVMPRFAEQVEVAIEALSTSPPQPFEENEFIDASRLVYDGVRDIRKAVLMIRTPEELEDDSDFEQEDYDARSRTSIQTEDDQLIAGQSARAIMAQLPQEEKAKIAEQVESFRQEKSKLDAEVAKWDDNGNDIIVLAKQMCMIMMEMTDFTRGKGPLKNSSDVINAAKKIAEAGSRMDKLARAVADQCPDSACKQDLLAYLQRIALYCHQLNICSKVKAEVQNLGGELIVSGLDSATSLIQAAKNLMNAVVLTVKASYVASTKYQKVYGTAAVNSPVVSWRMKAPEKKPLVKREKPEECQTRVRRGSQKKHISPVQALSEFKAMDSF.

The segment covering 823 to 839 (PEKKPLVKREKPEECQT) has biased composition (basic and acidic residues). The interval 823–851 (PEKKPLVKREKPEECQTRVRRGSQKKHIS) is disordered. The segment covering 840–850 (RVRRGSQKKHI) has biased composition (basic residues).

The protein belongs to the vinculin/alpha-catenin family.

Its subcellular location is the cell membrane. The protein resides in the cytoplasm. It localises to the cytoskeleton. The protein localises to the cell junction. It is found in the adherens junction. Its subcellular location is the cell projection. The protein resides in the axon. It localises to the nucleus. May function as a linker between cadherin adhesion receptors and the cytoskeleton to regulate cell-cell adhesion and differentiation in the nervous system. This is Catenin alpha-2 (Ctnna2) from Danio rerio (Zebrafish).